A 459-amino-acid polypeptide reads, in one-letter code: N-chimaerin (459 aa).

N-acetylalanine is present on Ala-2. An SH2 domain is found at 49–135 (EYHGMISREE…IETKAAEYIA (87 aa)). Thr-192 is subject to Phosphothreonine. Residues 205–255 (VHNFKVHTFRGPHWCEYCANFMWGLIAQGVKCADCGLNVHKQCSKMVPNDC) form a Phorbol-ester/DAG-type zinc finger. The 192-residue stretch at 268–459 (CDLTTLVKAH…LLIKNEDILF (192 aa)) folds into the Rho-GAP domain. Thr-340 is subject to Phosphothreonine.

Interacts with EPHA4; effector of EPHA4 in axon guidance linking EPHA4 activation to RAC1 regulation. May also interact with EPHB1 and EPHB2. Phosphorylated. Phosphorylation is EPHA4 kinase activity-dependent.

In terms of biological role, GTPase-activating protein for p21-rac and a phorbol ester receptor. May play an important role in neuronal signal-transduction mechanisms. Involved in the assembly of neuronal locomotor circuits as a direct effector of EPHA4 in axon guidance. The sequence is that of N-chimaerin (Chn1) from Mus musculus (Mouse).